A 96-amino-acid chain; its full sequence is Large ribosomal subunit protein uL23 (96 aa).

The protein belongs to the universal ribosomal protein uL23 family. In terms of assembly, part of the 50S ribosomal subunit. Contacts protein L29, and trigger factor when it is bound to the ribosome.

Functionally, one of the early assembly proteins it binds 23S rRNA. One of the proteins that surrounds the polypeptide exit tunnel on the outside of the ribosome. Forms the main docking site for trigger factor binding to the ribosome. The sequence is that of Large ribosomal subunit protein uL23 from Caldanaerobacter subterraneus subsp. tengcongensis (strain DSM 15242 / JCM 11007 / NBRC 100824 / MB4) (Thermoanaerobacter tengcongensis).